A 287-amino-acid chain; its full sequence is Bifunctional protein FolD (287 aa).

NADP(+) is bound by residues 166-168 and I232; that span reads GAS.

Belongs to the tetrahydrofolate dehydrogenase/cyclohydrolase family. As to quaternary structure, homodimer.

The catalysed reaction is (6R)-5,10-methylene-5,6,7,8-tetrahydrofolate + NADP(+) = (6R)-5,10-methenyltetrahydrofolate + NADPH. It carries out the reaction (6R)-5,10-methenyltetrahydrofolate + H2O = (6R)-10-formyltetrahydrofolate + H(+). It participates in one-carbon metabolism; tetrahydrofolate interconversion. In terms of biological role, catalyzes the oxidation of 5,10-methylenetetrahydrofolate to 5,10-methenyltetrahydrofolate and then the hydrolysis of 5,10-methenyltetrahydrofolate to 10-formyltetrahydrofolate. The sequence is that of Bifunctional protein FolD from Aeromonas hydrophila subsp. hydrophila (strain ATCC 7966 / DSM 30187 / BCRC 13018 / CCUG 14551 / JCM 1027 / KCTC 2358 / NCIMB 9240 / NCTC 8049).